The sequence spans 513 residues: Probable tubulin polyglutamylase ttll-15 (513 aa).

The region spanning 73–411 (VTGSYESAHT…STPITKEADI (339 aa)) is the TTL domain. ATP contacts are provided by residues 216–219 (QKFV), Lys229, and Asp231.

Belongs to the tubulin--tyrosine ligase family. Expressed in hypodermis and pharyngeal muscles.

In terms of biological role, probable polyglutamylase that forms polyglutamate side chains on tubulin. Probably acts when complexed with other proteins. Appears to be dispensable for polar spindle formation in dividing embryonic cells, for cilia-dependent osmotic avoidance and for male mating behavior. Regulates microtubule dynamics in uterine muscle cells. This chain is Probable tubulin polyglutamylase ttll-15, found in Caenorhabditis elegans.